We begin with the raw amino-acid sequence, 350 residues long: Atypical chemokine receptor 4 (350 aa).

Topologically, residues 1-41 (MAVEYNQSTDYYYEENEMNDTHDYSQYEVICIKEEVRKFAK) are extracellular. N-linked (GlcNAc...) asparagine glycans are attached at residues Asn-6 and Asn-19. The chain crosses the membrane as a helical span at residues 42–66 (VFLPAFFTIAFIIGLAGNSTVVAIY). Over 67–79 (AYYKKRRTKTDVY) the chain is Cytoplasmic. A helical transmembrane segment spans residues 80–99 (ILNLAVADLFLLFTLPFWAV). The Extracellular segment spans residues 100-113 (NAVHGWVLGKIMCK). An intrachain disulfide couples Cys-112 to Cys-184. Residues 114–135 (VTSALYTVNFVSGMQFLACIST) traverse the membrane as a helical segment. Over 136–153 (DRYWAVTKAPSQSGVGKP) the chain is Cytoplasmic. Residues 154–175 (CWVICFCVWVAAILLSIPQLVF) form a helical membrane-spanning segment. Residues 176-199 (YTVNHKARCVPIFPYHLGTSMKAS) are Extracellular-facing. A helical membrane pass occupies residues 200-222 (IQILEICIGFIIPFLIMAVCYFI). At 223–241 (TAKTLIKMPNIKKSQPLKV) the chain is on the cytoplasmic side. The helical transmembrane segment at 242 to 265 (LFTVVIVFIVTQLPYNIVKFCQAI) threads the bilayer. At 266–283 (DIIYSLITDCDMSKRMDV) the chain is on the extracellular side. Residues 284-306 (AIQITESIALFHSCLNPVLYVFM) traverse the membrane as a helical segment. At 307–350 (GTSFKNYIMKVAKKYGSWRRQRQNVEEIPFESEDATEPTSTFSI) the chain is on the cytoplasmic side.

Belongs to the G-protein coupled receptor 1 family. Atypical chemokine receptor subfamily. As to quaternary structure, forms heteromers with CXCR3. Interacts with ARRB1 and ARRB2. In terms of processing, the Ser/Thr residues in the C-terminal cytoplasmic tail may be phosphorylated. Expressed in circumvallate and fungiform papillae, olfactory epithelium and lung. Lower expression in liver, kidney and tongue epithelium bearing no taste papillae. Very low expression in the cerebral cortex of the brain.

Its subcellular location is the early endosome. It is found in the recycling endosome. It localises to the cell membrane. Functionally, atypical chemokine receptor that controls chemokine levels and localization via high-affinity chemokine binding that is uncoupled from classic ligand-driven signal transduction cascades, resulting instead in chemokine sequestration, degradation, or transcytosis. Also known as interceptor (internalizing receptor) or chemokine-scavenging receptor or chemokine decoy receptor. Acts as a receptor for chemokines CCL2, CCL8, CCL13, CCL19, CCL21 and CCL25. Chemokine-binding does not activate G-protein-mediated signal transduction but instead induces beta-arrestin recruitment, leading to ligand internalization. Plays an important role in controlling the migration of immune and cancer cells that express chemokine receptors CCR7 and CCR9, by reducing the availability of CCL19, CCL21, and CCL25 through internalization. Negatively regulates CXCR3-induced chemotaxis. Regulates T-cell development in the thymus. The sequence is that of Atypical chemokine receptor 4 (ACKR4) from Bos taurus (Bovine).